A 252-amino-acid polypeptide reads, in one-letter code: Phosphate import ATP-binding protein PstB (252 aa).

Residues V5–I247 enclose the ABC transporter domain. G37 to S44 contributes to the ATP binding site.

This sequence belongs to the ABC transporter superfamily. Phosphate importer (TC 3.A.1.7) family. In terms of assembly, the complex is composed of two ATP-binding proteins (PstB), two transmembrane proteins (PstC and PstA) and a solute-binding protein (PstS).

The protein resides in the cell inner membrane. The catalysed reaction is phosphate(out) + ATP + H2O = ADP + 2 phosphate(in) + H(+). Its function is as follows. Part of the ABC transporter complex PstSACB involved in phosphate import. Responsible for energy coupling to the transport system. This chain is Phosphate import ATP-binding protein PstB, found in Geobacter metallireducens (strain ATCC 53774 / DSM 7210 / GS-15).